We begin with the raw amino-acid sequence, 50 residues long: Conotoxin Cal6.19 (50 aa).

The signal sequence occupies residues 1 to 22; that stretch reads MKVTCVLVLTLMALTVCQVATA. 3 disulfides stabilise this stretch: Cys24/Cys37, Cys30/Cys41, and Cys36/Cys46.

In terms of tissue distribution, expressed by the venom duct.

The protein localises to the secreted. In terms of biological role, probable neurotoxin. The protein is Conotoxin Cal6.19 of Californiconus californicus (California cone).